Reading from the N-terminus, the 475-residue chain is E3 ubiquitin-protein ligase TRIM62 (475 aa).

The RING-type zinc-finger motif lies at 11–54; sequence CSICLSIYQDPVSLGCEHYFCRRCITEHWVRQEAQGARDCPECR. The B box-type zinc-finger motif lies at 88–128; that stretch reads RAARPCQAHDKVKLFCLTDRALLCFFCDEPALHEQHQVTGI. Zn(2+) is bound by residues cysteine 93, histidine 96, cysteine 114, and histidine 120. Residues 121–241 are a coiled coil; that stretch reads EQHQVTGIDD…LQERLAETDR (121 aa). The 199-residue stretch at 277-475 folds into the B30.2/SPRY domain; that stretch reads PLQYTIWKSL…QPLRINTVRI (199 aa).

This sequence belongs to the TRIM/RBCC family. As to quaternary structure, interacts with the ubiquitin-conjugating enzyme, UBE2D2. Polyubiquitinated, autoubiquitinated in the presence of UBE2D2.

It localises to the cytoplasm. The enzyme catalyses S-ubiquitinyl-[E2 ubiquitin-conjugating enzyme]-L-cysteine + [acceptor protein]-L-lysine = [E2 ubiquitin-conjugating enzyme]-L-cysteine + N(6)-ubiquitinyl-[acceptor protein]-L-lysine.. The protein operates within protein modification; protein ubiquitination. In terms of biological role, E3 ubiquitin ligase that plays a role in antifungal immunity by mediating 'Lys-27'-linked ubiquitination of CARD9 downstream of C-type lectin receptors; leading to CARD9 activation, followed by activation of NF-kappa-B and MAP kinase p38 pathways. E3 ubiquitin ligase activity is dependent on E2 ubiquitin-conjugating enzyme UBE2D2. This is E3 ubiquitin-protein ligase TRIM62 from Mus musculus (Mouse).